The primary structure comprises 469 residues: Cysteine--tRNA ligase (469 aa).

Residue cysteine 29 coordinates Zn(2+). The 'HIGH' region motif lies at 31–41 (PTVYNYIHIGN). Zn(2+)-binding residues include cysteine 210, histidine 235, and glutamate 239. The short motif at 267–271 (KMSKS) is the 'KMSKS' region element. Residue lysine 270 participates in ATP binding.

The protein belongs to the class-I aminoacyl-tRNA synthetase family. In terms of assembly, monomer. Requires Zn(2+) as cofactor.

The protein resides in the cytoplasm. The enzyme catalyses tRNA(Cys) + L-cysteine + ATP = L-cysteinyl-tRNA(Cys) + AMP + diphosphate. In Thermosipho africanus (strain TCF52B), this protein is Cysteine--tRNA ligase.